Reading from the N-terminus, the 936-residue chain is Isoleucine--tRNA ligase (936 aa).

The short motif at 58–68 (PYANGNIHIGH) is the 'HIGH' region element. E560 contributes to the L-isoleucyl-5'-AMP binding site. The 'KMSKS' region signature appears at 601–605 (KMSKS). K604 lines the ATP pocket. Residues C899, C902, C919, and C922 each contribute to the Zn(2+) site.

This sequence belongs to the class-I aminoacyl-tRNA synthetase family. IleS type 1 subfamily. Monomer. The cofactor is Zn(2+).

It is found in the cytoplasm. It catalyses the reaction tRNA(Ile) + L-isoleucine + ATP = L-isoleucyl-tRNA(Ile) + AMP + diphosphate. Functionally, catalyzes the attachment of isoleucine to tRNA(Ile). As IleRS can inadvertently accommodate and process structurally similar amino acids such as valine, to avoid such errors it has two additional distinct tRNA(Ile)-dependent editing activities. One activity is designated as 'pretransfer' editing and involves the hydrolysis of activated Val-AMP. The other activity is designated 'posttransfer' editing and involves deacylation of mischarged Val-tRNA(Ile). This is Isoleucine--tRNA ligase from Proteus mirabilis (strain HI4320).